The following is a 118-amino-acid chain: MKFQPLGERVLVERLEEENKTSSGIIIPDNAKEKPLMGVVKAVSHKISEGCKCVKEGDVIAFGKYKGTEIVLDGTEYMVLELEDILGIVNAGSCCHANSHDHKDHKHAEACCHDHKKH.

The protein belongs to the GroES chaperonin family. Heptamer of 7 subunits arranged in a ring. Interacts with the chaperonin GroEL.

It localises to the cytoplasm. Together with the chaperonin GroEL, plays an essential role in assisting protein folding. The GroEL-GroES system forms a nano-cage that allows encapsulation of the non-native substrate proteins and provides a physical environment optimized to promote and accelerate protein folding. GroES binds to the apical surface of the GroEL ring, thereby capping the opening of the GroEL channel. This is Co-chaperonin GroES from Helicobacter acinonychis (strain Sheeba).